The following is a 97-amino-acid chain: Citrate lyase acyl carrier protein (97 aa).

O-(phosphoribosyl dephospho-coenzyme A)serine is present on serine 14.

It belongs to the CitD family. Oligomer with a subunit composition of (alpha,beta,gamma)6.

The protein resides in the cytoplasm. Covalent carrier of the coenzyme of citrate lyase. The sequence is that of Citrate lyase acyl carrier protein from Lactobacillus helveticus (strain DPC 4571).